A 538-amino-acid polypeptide reads, in one-letter code: Phosphoenolpyruvate carboxykinase (ATP) (538 aa).

Substrate-binding residues include arginine 64, tyrosine 205, and lysine 211. ATP-binding positions include lysine 211, histidine 230, and glycine 246–threonine 254. 2 residues coordinate Mn(2+): lysine 211 and histidine 230. Mn(2+) is bound at residue aspartate 267. Residues glutamate 295, arginine 331, arginine 447–isoleucine 448, and threonine 453 each bind ATP. Residue arginine 331 participates in substrate binding.

The protein belongs to the phosphoenolpyruvate carboxykinase (ATP) family. In terms of assembly, monomer. Mn(2+) serves as cofactor.

The protein resides in the cytoplasm. It carries out the reaction oxaloacetate + ATP = phosphoenolpyruvate + ADP + CO2. It functions in the pathway carbohydrate biosynthesis; gluconeogenesis. Functionally, involved in the gluconeogenesis. Catalyzes the conversion of oxaloacetate (OAA) to phosphoenolpyruvate (PEP) through direct phosphoryl transfer between the nucleoside triphosphate and OAA. The chain is Phosphoenolpyruvate carboxykinase (ATP) from Haemophilus influenzae (strain PittGG).